We begin with the raw amino-acid sequence, 235 residues long: UPF0758 protein Swol_1642 (235 aa).

The region spanning 109–235 (IIKSPEDVQE…YCSLKARGLI (127 aa)) is the MPN domain. The Zn(2+) site is built by His184, His186, and Asp197. A JAMM motif motif is present at residues 184–197 (HNHPSGDPTPSQED).

The protein belongs to the UPF0758 family.

The protein is UPF0758 protein Swol_1642 of Syntrophomonas wolfei subsp. wolfei (strain DSM 2245B / Goettingen).